Reading from the N-terminus, the 226-residue chain is Cytidylate kinase (226 aa).

Residue 12–20 (GPSGAGKGT) coordinates ATP.

It belongs to the cytidylate kinase family. Type 1 subfamily.

Its subcellular location is the cytoplasm. The catalysed reaction is CMP + ATP = CDP + ADP. The enzyme catalyses dCMP + ATP = dCDP + ADP. This chain is Cytidylate kinase, found in Vibrio vulnificus (strain YJ016).